The sequence spans 366 residues: MQRYIQRLEEGHDLSPEEAEDAVGKILSTAQDEEIGRFLLALRAKGEKPEEIAGFVRGMKKAGKTIRPKTSFRLVDTCGTGGDGLNTINISTAAAIVTAAAGVPVAKHGNRAATSMSGSSDVLDALGIKTDLEPEAVRQTIEEIGIGFMFAPVFHPAMKRVAGVRKKLGVRTVFNILGPLTNPAGTKGQVIGVFDKKLCEPIAYALAELGTEHALVVHGDGMDEITNTGETYVAELKDGKVSTYTLTPEALGMLRANPEDIKGGTPKENARDLLCIFKGQKGPKRDIVVMNAAAALYVGGIVGSIRQAIPIAEDAIDSGKVMVKFNQFKTFTSEFYRQKNKESLSGKSMSMRSRTSILSPASGERV.

5-phospho-alpha-D-ribose 1-diphosphate is bound by residues glycine 79, glycine 82 to aspartate 83, threonine 87, asparagine 89 to threonine 92, lysine 107 to serine 115, and serine 119. Residue glycine 79 participates in anthranilate binding. Residue serine 91 coordinates Mg(2+). Asparagine 110 provides a ligand contact to anthranilate. Arginine 165 is a binding site for anthranilate. Residues aspartate 223 and glutamate 224 each contribute to the Mg(2+) site. The segment at glutamate 342 to valine 366 is disordered. Over residues serine 345–serine 359 the composition is skewed to polar residues.

The protein belongs to the anthranilate phosphoribosyltransferase family. As to quaternary structure, homodimer. It depends on Mg(2+) as a cofactor.

The enzyme catalyses N-(5-phospho-beta-D-ribosyl)anthranilate + diphosphate = 5-phospho-alpha-D-ribose 1-diphosphate + anthranilate. Its pathway is amino-acid biosynthesis; L-tryptophan biosynthesis; L-tryptophan from chorismate: step 2/5. Catalyzes the transfer of the phosphoribosyl group of 5-phosphorylribose-1-pyrophosphate (PRPP) to anthranilate to yield N-(5'-phosphoribosyl)-anthranilate (PRA). The chain is Anthranilate phosphoribosyltransferase from Methanosarcina barkeri (strain Fusaro / DSM 804).